The primary structure comprises 478 residues: Keratin, type II cytoskeletal 8 (478 aa).

The interval 1–97 (MSIRVTQKSY…DPNIQAVRTQ (97 aa)) is head. Position 9 is a phosphoserine; by PKC/PRKCE (Ser-9). Residue Lys-11 forms a Glycyl lysine isopeptide (Lys-Gly) (interchain with G-Cter in SUMO2) linkage. Phosphoserine is present on residues Ser-13, Ser-15, Ser-21, and Ser-22. The disordered stretch occupies residues 16–44 (APRSFSSRSYTSGPGSRISSSAFSRVGSS). Residue Arg-23 is modified to Omega-N-methylarginine. Phosphoserine; by PKC/PRKCE is present on Ser-24. Position 26 is a phosphothreonine (Thr-26). Phosphoserine occurs at positions 27 and 31. Residue Arg-32 is modified to Omega-N-methylarginine. 2 positions are modified to phosphoserine: Ser-34 and Ser-39. Arg-40 carries the post-translational modification Omega-N-methylarginine. Ser-43 and Ser-44 each carry phosphoserine. At Arg-48 the chain carries Asymmetric dimethylarginine; alternate. Arg-48 is subject to Omega-N-methylarginine; alternate. Ser-81 is modified (phosphoserine; by MAPK). Residues 98–133 (EKEQIKTLNNKFASFIDKVRHLEQQNKVLETKWNLL) form a coil 1A region. In terms of domain architecture, IF rod spans 98–409 (EKEQIKTLNN…KLLEGEESRL (312 aa)). Lys-108 bears the N6-malonyllysine mark. Residues Lys-129 and Lys-137 each participate in a glycyl lysine isopeptide (Lys-Gly) (interchain with G-Cter in SUMO2) cross-link. The linker 1 stretch occupies residues 134–150 (QQQKTARSNIDNMFESY). Residues 151 to 242 (INNLRRQLET…QLYEEEIREM (92 aa)) form a coil 1B region. Lys-204 is covalently cross-linked (Glycyl lysine isopeptide (Lys-Gly) (interchain with G-Cter in SUMO1); alternate). A Glycyl lysine isopeptide (Lys-Gly) (interchain with G-Cter in SUMO2); alternate cross-link involves residue Lys-204. Lys-214 is modified (N6-acetyllysine). A Phosphotyrosine modification is found at Tyr-235. A linker 12 region spans residues 243–266 (QSQISDTSVVLEMDNNRNLDLDGI). A coil 2 region spans residues 267–405 (IAEVKAQYEE…ATYRKLLEGE (139 aa)). Positions 268–389 (AEVKAQYEEI…EYQELMNVKL (122 aa)) are necessary for interaction with PNN. Residue Lys-271 forms a Glycyl lysine isopeptide (Lys-Gly) (interchain with G-Cter in SUMO2) linkage. A Phosphoserine modification is found at Ser-281. Lys-292 participates in a covalent cross-link: Glycyl lysine isopeptide (Lys-Gly) (interchain with G-Cter in SUMO2). Residue Lys-302 forms a Glycyl lysine isopeptide (Lys-Gly) (interchain with G-Cter in SUMO2); alternate linkage. N6-acetyllysine; alternate is present on Lys-302. A Glycyl lysine isopeptide (Lys-Gly) (interchain with G-Cter in SUMO2) cross-link involves residue Lys-311. A Glycyl lysine isopeptide (Lys-Gly) (interchain with G-Cter in SUMO2); alternate cross-link involves residue Lys-332. Lys-332 bears the N6-acetyllysine; alternate mark. Phosphoserine is present on Ser-337. A Glycyl lysine isopeptide (Lys-Gly) (interchain with G-Cter in SUMO2) cross-link involves residue Lys-400. A tail region spans residues 406 to 478 (ESRLESGMQN…VSESSDVLSK (73 aa)). Phosphoserine is present on residues Ser-407, Ser-411, Ser-417, Ser-424, and Ser-433. Residue Lys-467 forms a Glycyl lysine isopeptide (Lys-Gly) (interchain with G-Cter in SUMO1); alternate linkage. Lys-467 participates in a covalent cross-link: Glycyl lysine isopeptide (Lys-Gly) (interchain with G-Cter in SUMO2); alternate. A phosphoserine mark is found at Ser-470, Ser-472, Ser-473, and Ser-477.

Belongs to the intermediate filament family. As to quaternary structure, heterotetramer of two type I and two type II keratins. Forms a heterodimer with KRT18. Associates with KRT20. Interacts with PNN. When associated with KRT19, interacts with DMD. Interacts with TCHP. Interacts with APEX1. Interacts with GPER1. Interacts with EPPK1. Interacts with PKP1 and PKP2. O-glycosylated. O-GlcNAcylation at multiple sites increases solubility, and decreases stability by inducing proteasomal degradation. In terms of processing, O-glycosylated (O-GlcNAcylated), in a cell cycle-dependent manner. Expressed in bladder, liver, exocervix and (in very low amounts) esophagus.

Its subcellular location is the cytoplasm. It is found in the nucleus. The protein resides in the nucleoplasm. The protein localises to the nucleus matrix. Together with KRT19, helps to link the contractile apparatus to dystrophin at the costameres of striated muscle. The sequence is that of Keratin, type II cytoskeletal 8 (KRT8) from Bos taurus (Bovine).